The following is a 252-amino-acid chain: Imidazole glycerol phosphate synthase subunit HisF (252 aa).

Residues aspartate 13 and aspartate 132 contribute to the active site.

This sequence belongs to the HisA/HisF family. In terms of assembly, heterodimer of HisH and HisF.

The protein localises to the cytoplasm. It carries out the reaction 5-[(5-phospho-1-deoxy-D-ribulos-1-ylimino)methylamino]-1-(5-phospho-beta-D-ribosyl)imidazole-4-carboxamide + L-glutamine = D-erythro-1-(imidazol-4-yl)glycerol 3-phosphate + 5-amino-1-(5-phospho-beta-D-ribosyl)imidazole-4-carboxamide + L-glutamate + H(+). The protein operates within amino-acid biosynthesis; L-histidine biosynthesis; L-histidine from 5-phospho-alpha-D-ribose 1-diphosphate: step 5/9. Functionally, IGPS catalyzes the conversion of PRFAR and glutamine to IGP, AICAR and glutamate. The HisF subunit catalyzes the cyclization activity that produces IGP and AICAR from PRFAR using the ammonia provided by the HisH subunit. This Campylobacter hominis (strain ATCC BAA-381 / DSM 21671 / CCUG 45161 / LMG 19568 / NCTC 13146 / CH001A) protein is Imidazole glycerol phosphate synthase subunit HisF.